The primary structure comprises 510 residues: MEIRADEISRIIREQIKDYGKKVEVAETGSILSQADGVARIYGLAGAAAGELLEFPGGIRGLVLNLEEDNVGAAIMGPYEHIREGDPVKRTGLIAEVPVGEELLGRVVDGLGNPIDGRGPLNAKHQRKIEIKAPGIVKRKSVHEPMQTGLKAIDALVPIGRGQRELILGDRQTGKTAVAIDTILNNKGNNLYCFYVAIGQKQSTVARVVDTLKKHGAMEYTTVISASASDPAPMQYLAPYTGVTMAEYFRDSGRHALIIYDDLSKQAVAYRQLSLLLRRPPGREAYPGDVFYLHSRLLERAAKLSDKEGAGSLTALPIIETQAGDVSAYIPTNVISITDGQIFLESNLFFQGVRPAINVGISVSRVGGSAQIKAMKQVAGSLKLDLAQYRELAAFAQFGSDLDKATQETLARGERLVELLKQGQYAPLSVEKQVIQIYAGTQKDAGGHNWIRSVPTEQVVRYMAELLEFLDARHPGIAKAIAEKKALDDGIRKDLDAALTEFAGIFKIEG.

169–176 (GDRQTGKT) contributes to the ATP binding site.

It belongs to the ATPase alpha/beta chains family. As to quaternary structure, F-type ATPases have 2 components, CF(1) - the catalytic core - and CF(0) - the membrane proton channel. CF(1) has five subunits: alpha(3), beta(3), gamma(1), delta(1), epsilon(1). CF(0) has three main subunits: a(1), b(2) and c(9-12). The alpha and beta chains form an alternating ring which encloses part of the gamma chain. CF(1) is attached to CF(0) by a central stalk formed by the gamma and epsilon chains, while a peripheral stalk is formed by the delta and b chains.

It localises to the cell inner membrane. It carries out the reaction ATP + H2O + 4 H(+)(in) = ADP + phosphate + 5 H(+)(out). Functionally, produces ATP from ADP in the presence of a proton gradient across the membrane. The alpha chain is a regulatory subunit. The sequence is that of ATP synthase subunit alpha from Anaeromyxobacter dehalogenans (strain 2CP-C).